Here is a 224-residue protein sequence, read N- to C-terminus: UPF0758 protein AFE_0358 (224 aa).

Residues 102–224 form the MPN domain; sequence GLDSPLRVRQ…PLSLREQGGW (123 aa). Zn(2+) contacts are provided by His-173, His-175, and Asp-186. The JAMM motif signature appears at 173 to 186; it reads HNHPSGVAEPSAAD.

It belongs to the UPF0758 family.

This chain is UPF0758 protein AFE_0358, found in Acidithiobacillus ferrooxidans (strain ATCC 23270 / DSM 14882 / CIP 104768 / NCIMB 8455) (Ferrobacillus ferrooxidans (strain ATCC 23270)).